A 1125-amino-acid chain; its full sequence is Protein efr-3 (1125 aa).

Disordered stretches follow at residues 240–261, 471–493, 788–819, and 845–1093; these read RTSNATAQPSETTGGEPGPNPI, RPSRPTSPPNSSPNGERSDNGAA, TSPPTSPTTSPGRNFTHPMLGSTLSATPKDET, and QAGS…LGEK. The segment covering 242–252 has biased composition (polar residues); the sequence is SNATAQPSETT. Residues 788–798 are compositionally biased toward low complexity; it reads TSPPTSPTTSP. The segment covering 845–854 has biased composition (polar residues); the sequence is QAGSSQTASL. Positions 855 to 877 are enriched in low complexity; the sequence is NGTNGTHRNTVNNNNRLGVNGVT. Polar residues-rich tracts occupy residues 878 to 896, 975 to 1011, and 1046 to 1071; these read SPNGSNSNLRPSSSPTGPN, LSFNPAASGSRQGSPGNTSQAASSPPRRTSQDRTQQL, and SRTTSRTQPQATTAHTTLPRPSTSSK.

This sequence belongs to the EFR3 family.

The protein is Protein efr-3 (efr-3) of Neurospora crassa (strain ATCC 24698 / 74-OR23-1A / CBS 708.71 / DSM 1257 / FGSC 987).